The following is a 363-amino-acid chain: Pyrimidine monooxygenase RutA (363 aa).

FMN contacts are provided by residues 49-50 (IK), N115, E124, 140-141 (RY), and S190.

Belongs to the NtaA/SnaA/DszA monooxygenase family. RutA subfamily.

The catalysed reaction is uracil + FMNH2 + NADH + O2 = (Z)-3-ureidoacrylate + FMN + NAD(+) + H2O + H(+). It catalyses the reaction thymine + FMNH2 + NADH + O2 = (Z)-2-methylureidoacrylate + FMN + NAD(+) + H2O + H(+). Catalyzes the pyrimidine ring opening between N-3 and C-4 by an unusual flavin hydroperoxide-catalyzed mechanism, adding oxygen atoms in the process to yield ureidoacrylate peracid, that immediately reacts with FMN forming ureidoacrylate and FMN-N(5)-oxide. The FMN-N(5)-oxide reacts spontaneously with NADH to produce FMN. Requires the flavin reductase RutF to regenerate FMN in vivo. This Escherichia coli (strain SMS-3-5 / SECEC) protein is Pyrimidine monooxygenase RutA.